The chain runs to 114 residues: uncharacterized protein (114 aa).

Transmembrane regions (helical) follow at residues 14 to 34 and 75 to 95; these read VMSA…CFLL and VIII…HPVA.

Its subcellular location is the membrane. This is an uncharacterized protein from Homo sapiens (Human).